Consider the following 185-residue polypeptide: Ribosome-recycling factor (185 aa).

Belongs to the RRF family.

The protein resides in the cytoplasm. Responsible for the release of ribosomes from messenger RNA at the termination of protein biosynthesis. May increase the efficiency of translation by recycling ribosomes from one round of translation to another. The protein is Ribosome-recycling factor of Bacillus anthracis (strain CDC 684 / NRRL 3495).